Reading from the N-terminus, the 78-residue chain is Large ribosomal subunit protein eL20 (78 aa).

This sequence belongs to the eukaryotic ribosomal protein eL20 family. As to quaternary structure, part of the 50S ribosomal subunit. Binds 23S rRNA.

The sequence is that of Large ribosomal subunit protein eL20 from Pyrobaculum neutrophilum (strain DSM 2338 / JCM 9278 / NBRC 100436 / V24Sta) (Thermoproteus neutrophilus).